A 308-amino-acid chain; its full sequence is MSTIDSPAIGTATINAVSVDCPAKTNLTLHVGPSHAEWGGRHELDTIYCAVGVYDTVTATRKAPGSGFSLNLEGAYLGDLASSGSDMRRNHAVLALFAMAEASSHEPDVALNIDKRIPVGAGMAGGSADAAATILALNTLWDLDWPIERLQEVAATLGADMPFCLTGGYARGTGFGERIEQLDDDGDIVRDLTERGFTGHLLVGAYRAELRTPEVYATFDQIGAGDGDENHLQKAAVSLHPRSGQAIEEALRAGASQAFVSGSGPSVIAFVPTEDAADAVQRAWQDSRCVDRIIATNAPARPIVHITA.

Lys24 is a catalytic residue. 118–128 is an ATP binding site; sequence PVGAGMAGGSA. The active site involves Asp160.

This sequence belongs to the GHMP kinase family. IspE subfamily.

The enzyme catalyses 4-CDP-2-C-methyl-D-erythritol + ATP = 4-CDP-2-C-methyl-D-erythritol 2-phosphate + ADP + H(+). It participates in isoprenoid biosynthesis; isopentenyl diphosphate biosynthesis via DXP pathway; isopentenyl diphosphate from 1-deoxy-D-xylulose 5-phosphate: step 3/6. In terms of biological role, catalyzes the phosphorylation of the position 2 hydroxy group of 4-diphosphocytidyl-2C-methyl-D-erythritol. This is 4-diphosphocytidyl-2-C-methyl-D-erythritol kinase from Bifidobacterium adolescentis (strain ATCC 15703 / DSM 20083 / NCTC 11814 / E194a).